A 359-amino-acid chain; its full sequence is 3-dehydroquinate synthase (359 aa).

NAD(+)-binding positions include 71-76 (DGEQHK), 105-109 (GVIGD), 129-130 (TT), Lys-142, and Lys-151. Zn(2+) is bound by residues Glu-184, His-247, and His-264.

The protein belongs to the sugar phosphate cyclases superfamily. Dehydroquinate synthase family. Requires NAD(+) as cofactor. Co(2+) is required as a cofactor. It depends on Zn(2+) as a cofactor.

It localises to the cytoplasm. It catalyses the reaction 7-phospho-2-dehydro-3-deoxy-D-arabino-heptonate = 3-dehydroquinate + phosphate. It functions in the pathway metabolic intermediate biosynthesis; chorismate biosynthesis; chorismate from D-erythrose 4-phosphate and phosphoenolpyruvate: step 2/7. Its function is as follows. Catalyzes the conversion of 3-deoxy-D-arabino-heptulosonate 7-phosphate (DAHP) to dehydroquinate (DHQ). The protein is 3-dehydroquinate synthase of Chromobacterium violaceum (strain ATCC 12472 / DSM 30191 / JCM 1249 / CCUG 213 / NBRC 12614 / NCIMB 9131 / NCTC 9757 / MK).